A 748-amino-acid chain; its full sequence is MFNEITKSVTWNGQVLELSTGKIARQADGAVTVKMGNSVLLCTAVVANKAKEGIGFLPLTINYREMAYAAGKIPGGFFKHEGKPSDREVLVSRLIDRPIRPLFHPAFVNETHVTCSVLSYDPETPVDILAIIGASAALSLSPAPYLEIVAASKVGLINGEFVLNPTLALLKTSQLDLVVAGTSDSVMMVESEAHLLSEEQMLEAVKFGFESFQPVIKIIKELAEEAKKPKLEMQALYPASLKKEIEKLFVKEIEQAFAMKSKQERSTNLDLITEKVFTHFVSDIENKKYSHYQIESALKAIESGILRNEILEKNRRIDGRSTTDIRQIACEIGLLPSAHGSALFTRGETQSLVSTTFGTSLDEQIVDSLEGEYKERFMLNYIFPPYSVNEAMPMKAPSRREVGHGKLAWRAINPILPNKVQFPYSIRVVAETTESNGSSSMATVCGSSLALMYAGVPIKAPVAGIAMGLVKEGKNFAVLSDILGDEDYFGDMDFKVAGTGEGITALQMDIKISGVDFKIMKVALEQARLGRLHILEQMNKVISKPNNELSKNAPSTTTIKIDKDKIRDIIGPGGKVIKEICETSGAKIDISDDGTVSVYASDRDKLKVALDKIKAIVVEPEIGEIFNGTVVKVLDSGAFINYVGNKDGFVHISEVSGERIETVSSVLKQGDIVKVKLIGFDNKGKAKLTIKNADKDKFSNNTKPKTSVNNTKDNSEPEQRHDSSKKRAWNEDNNAEIAEVITERKYFN.

Positions 487 and 493 each coordinate Mg(2+). Positions 554–613 constitute a KH domain; the sequence is PSTTTIKIDKDKIRDIIGPGGKVIKEICETSGAKIDISDDGTVSVYASDRDKLKVALDKI. Residues 623 to 691 form the S1 motif domain; that stretch reads GEIFNGTVVK…NKGKAKLTIK (69 aa). The disordered stretch occupies residues 695 to 733; sequence KDKFSNNTKPKTSVNNTKDNSEPEQRHDSSKKRAWNEDN. Over residues 699-712 the composition is skewed to polar residues; it reads SNNTKPKTSVNNTK. Over residues 713–722 the composition is skewed to basic and acidic residues; the sequence is DNSEPEQRHD.

Belongs to the polyribonucleotide nucleotidyltransferase family. Mg(2+) is required as a cofactor.

The protein localises to the cytoplasm. It catalyses the reaction RNA(n+1) + phosphate = RNA(n) + a ribonucleoside 5'-diphosphate. In terms of biological role, involved in mRNA degradation. Catalyzes the phosphorolysis of single-stranded polyribonucleotides processively in the 3'- to 5'-direction. This is Polyribonucleotide nucleotidyltransferase from Rickettsia rickettsii (strain Iowa).